The following is an 880-amino-acid chain: Leucine-rich repeat-containing protein 66 (880 aa).

A helical membrane pass occupies residues 4-24 (LYFRVITIVIGLYFTGIMTNA). Asn-45 carries N-linked (GlcNAc...) asparagine glycosylation. LRR repeat units lie at residues 86–107 (KIKH…PFAY), 110–130 (ALEV…DLLS), 149–171 (LLKV…WKLK), 172–193 (SLQS…DFHN), 196–217 (QLEN…AFKD), and 220–241 (KLQV…MIIA). The N-linked (GlcNAc...) asparagine glycan is linked to Asn-115. The segment at 319–368 (SKAERPQGGRHTGISTLGKKAKAGSGLRKKQRRLPRSVRSTRDVQAAGKK) is disordered. Residues 337 to 354 (KKAKAGSGLRKKQRRLPR) show a composition bias toward basic residues. The chain crosses the membrane as a helical span at residues 376 to 396 (ALAVCLSVFITFLVAFSLGAF). Disordered regions lie at residues 463–504 (PHPH…NDGA) and 679–746 (VTPA…SKDN). Residues 483–493 (GSSQSPGQCGD) show a composition bias toward polar residues. Acidic residues predominate over residues 697–707 (CELESDCDSDE). Positions 709 to 720 (SLFTLSSISSES) are enriched in low complexity. Phosphoserine is present on Ser-723. The segment covering 737–746 (DESSGASKDN) has biased composition (polar residues). Asn-746 carries an N-linked (GlcNAc...) asparagine glycan. Ser-752 is subject to Phosphoserine. Asn-756 carries N-linked (GlcNAc...) asparagine glycosylation. Disordered regions lie at residues 764–816 (GKCK…PLGD) and 855–880 (TPPC…DILK). 2 stretches are compositionally biased toward basic and acidic residues: residues 788 to 800 (THLE…DRSE) and 865 to 880 (DPDK…DILK).

Its subcellular location is the membrane. In Homo sapiens (Human), this protein is Leucine-rich repeat-containing protein 66 (LRRC66).